We begin with the raw amino-acid sequence, 100 residues long: MRLTPHEQDRLLISYAAELARRRRARGLRLNHPEAVAVITDHLLEGARDGRTVAELMVSGRSVLTRDDVMDGVPEMLHDVQVEATFPDGTKLVTVHQPIA.

This sequence belongs to the urease gamma subunit family. In terms of assembly, heterotrimer of UreA (gamma), UreB (beta) and UreC (alpha) subunits. Three heterotrimers associate to form the active enzyme.

It localises to the cytoplasm. It catalyses the reaction urea + 2 H2O + H(+) = hydrogencarbonate + 2 NH4(+). It functions in the pathway nitrogen metabolism; urea degradation; CO(2) and NH(3) from urea (urease route): step 1/1. The protein is Urease subunit gamma of Mycolicibacterium smegmatis (strain ATCC 700084 / mc(2)155) (Mycobacterium smegmatis).